Reading from the N-terminus, the 555-residue chain is Heterochromatin protein 1-binding protein 3 (555 aa).

Ala-2 carries the N-acetylalanine modification. At Ser-6 the chain carries Phosphoserine. The tract at residues Lys-29–Pro-134 is disordered. Thr-51 is subject to Phosphothreonine. Residues Thr-51–Pro-67 are compositionally biased toward basic and acidic residues. Lys-64 is covalently cross-linked (Glycyl lysine isopeptide (Lys-Gly) (interchain with G-Cter in SUMO2)). At Thr-85 the chain carries Phosphothreonine. Lys-97 is covalently cross-linked (Glycyl lysine isopeptide (Lys-Gly) (interchain with G-Cter in SUMO2)). The span at Pro-100–Lys-127 shows a compositional bias: basic and acidic residues. Ser-142, Ser-155, and Ser-156 each carry phosphoserine. Residues Pro-157–Gln-232 form the H15 1 domain. An N6-acetyllysine modification is found at Lys-190. Positions Ser-227–Glu-254 are disordered. Positions Lys-233 to Arg-247 are enriched in basic residues. A phosphoserine mark is found at Ser-248 and Ser-249. 2 consecutive H15 domains span residues Pro-255–Lys-330 and Leu-337–Phe-413. Residue Lys-258 forms a Glycyl lysine isopeptide (Lys-Gly) (interchain with G-Cter in SUMO2) linkage. Positions Leu-422–Lys-555 are disordered. The segment covering Asp-430–Glu-452 has biased composition (acidic residues). 3 positions are modified to phosphoserine: Ser-443, Ser-444, and Ser-448. The segment covering Gly-491–Arg-512 has biased composition (basic residues). Over residues Pro-513–Ser-532 the composition is skewed to low complexity. Over residues Ser-545–Lys-555 the composition is skewed to basic residues.

Interacts (via PxVxL motif) with CBX5.

Its subcellular location is the nucleus. The protein resides in the chromosome. Component of heterochromatin that maintains heterochromatin integrity during G1/S progression and regulates the duration of G1 phase to critically influence cell proliferative capacity. May play a role in hypoxia-induced oncogenesis. This chain is Heterochromatin protein 1-binding protein 3 (HP1BP3), found in Bos taurus (Bovine).